A 149-amino-acid chain; its full sequence is Calmodulin (149 aa).

Alanine 2 carries the N-acetylalanine modification. EF-hand domains follow at residues glutamate 8–asparagine 43, proline 44–aspartate 79, aspartate 81–lysine 116, and leucine 117–lysine 149. Aspartate 21, aspartate 23, aspartate 25, threonine 27, glutamate 32, aspartate 57, aspartate 59, asparagine 61, threonine 63, glutamate 68, aspartate 94, aspartate 96, asparagine 98, tyrosine 100, and glutamate 105 together coordinate Ca(2+). Lysine 116 is subject to N6,N6,N6-trimethyllysine. Positions 130, 132, 134, 136, and 141 each coordinate Ca(2+).

Belongs to the calmodulin family.

Functionally, calmodulin acts as part of a calcium signal transduction pathway by mediating the control of a large number of enzymes, ion channels, aquaporins and other proteins through calcium-binding. Calcium-binding is required for the activation of calmodulin. Among the enzymes to be stimulated by the calmodulin-calcium complex are a number of protein kinases, such as myosin light-chain kinases and calmodulin-dependent protein kinase type II (CaMK2), and phosphatases. In Oreochromis mossambicus (Mozambique tilapia), this protein is Calmodulin (calm).